The chain runs to 177 residues: Large ribosomal subunit protein uL6 (177 aa).

The protein belongs to the universal ribosomal protein uL6 family. In terms of assembly, part of the 50S ribosomal subunit.

Its function is as follows. This protein binds to the 23S rRNA, and is important in its secondary structure. It is located near the subunit interface in the base of the L7/L12 stalk, and near the tRNA binding site of the peptidyltransferase center. The protein is Large ribosomal subunit protein uL6 of Bordetella pertussis (strain Tohama I / ATCC BAA-589 / NCTC 13251).